The following is a 204-amino-acid chain: UPF0637 protein SA0957 (204 aa).

The protein belongs to the UPF0637 family.

The sequence is that of UPF0637 protein SA0957 from Staphylococcus aureus (strain N315).